We begin with the raw amino-acid sequence, 258 residues long: Sugar fermentation stimulation protein homolog (258 aa).

The protein belongs to the SfsA family.

The chain is Sugar fermentation stimulation protein homolog from Marinomonas sp. (strain MWYL1).